A 454-amino-acid chain; its full sequence is Serine/threonine-protein kinase NLK2 (454 aa).

The Protein kinase domain maps to 67-356 (PEPDRPIGYG…AKDALAHPYL (290 aa)). ATP is bound by residues 73 to 81 (IGYGAFGVV) and Lys-96. Asp-193 acts as the Proton acceptor in catalysis.

This sequence belongs to the protein kinase superfamily. CMGC Ser/Thr protein kinase family. MAP kinase subfamily. In terms of assembly, interacts with sox11, hmgxb4/hmg2l1, rnf138/narf, stat3.1 and mef2a. Requires Mg(2+) as cofactor.

It localises to the nucleus. It is found in the cytoplasm. It catalyses the reaction L-seryl-[protein] + ATP = O-phospho-L-seryl-[protein] + ADP + H(+). It carries out the reaction L-threonyl-[protein] + ATP = O-phospho-L-threonyl-[protein] + ADP + H(+). With respect to regulation, activated by tyrosine and threonine phosphorylation. Negatively regulates Wnt/beta-catenin-signaling during development. Plays a role together with sox11 in neural induction during early embryogenesis. Involved in TGFbeta-mediated mesoderm induction in early embryos, acting downstream of map3k7/tak1 to phosphorylate stat3. Augments the rnf138/narf-directed ubiquitination and degradation of tcf/lef by enhancing the association of rnf138/narf and tcf/lef. Phosphorylates mef2a to play a role in anterior neural development, including eye formation. In Xenopus tropicalis (Western clawed frog), this protein is Serine/threonine-protein kinase NLK2 (nlk.2).